The chain runs to 153 residues: Aminoglycoside N(6')-acetyltransferase type 1 (153 aa).

An N-acetyltransferase domain is found at 6 to 153; it reads PTIRQATPAD…YFRMPLEPSA (148 aa). The substrate site is built by W27, Y70, E83, D119, and E140.

In terms of assembly, homodimer.

It catalyses the reaction kanamycin B + acetyl-CoA = N(6')-acetylkanamycin B + CoA + H(+). Its function is as follows. Catalyzes the transfer of an acetyl group from acetyl-CoA to the 6'-amino group of aminoglycoside molecules conferring resistance to antibiotics containing the purpurosamine ring including amikacin, gentamicin, kanamycin B, tobramycin, netilmicin, and isepamicin. The chain is Aminoglycoside N(6')-acetyltransferase type 1 from Stenotrophomonas maltophilia (Pseudomonas maltophilia).